A 220-amino-acid chain; its full sequence is Small ribosomal subunit protein uS3 (220 aa).

The 69-residue stretch at 43 to 111 folds into the KH type-2 domain; sequence IRSYLTKTLD…QVQLNILEVK (69 aa).

It belongs to the universal ribosomal protein uS3 family. In terms of assembly, part of the 30S ribosomal subunit. Forms a tight complex with proteins S10 and S14.

Functionally, binds the lower part of the 30S subunit head. Binds mRNA in the 70S ribosome, positioning it for translation. This is Small ribosomal subunit protein uS3 from Tropheryma whipplei (strain TW08/27) (Whipple's bacillus).